An 800-amino-acid polypeptide reads, in one-letter code: Integrin beta-5 (800 aa).

Positions 1–24 (MPRAPALLFSCLLGLCALVPRLPG) are cleaved as a signal peptide. Residues 25–722 (LNICTSGSAT…PECGTAPSAM (698 aa)) are Extracellular-facing. The 50-residue stretch at 27–76 (ICTSGSATSCEECLLIHPKCAWCFKEDFGSLRSVTSRCDLKANLIRNGCG) folds into the PSI domain. 19 disulfide bridges follow: Cys28/Cys46, Cys36/Cys463, Cys39/Cys64, Cys49/Cys75, Cys202/Cys211, Cys259/Cys300, Cys401/Cys413, Cys433/Cys461, Cys465/Cys484, Cys476/Cys487, Cys489/Cys498, Cys500/Cys530, Cys513/Cys528, Cys522/Cys533, Cys535/Cys548, Cys550/Cys571, Cys555/Cys569, Cys563/Cys574, and Cys576/Cys585. Residues 136–378 (YPVDLYYLMD…QLIINAYNSI (243 aa)) form the VWFA domain. Residues Ser147 and Ser149 each contribute to the Mg(2+) site. Positions 149, 152, 153, and 184 each coordinate Ca(2+). Residues Asn242, Asp244, Pro246, and Glu247 each coordinate Ca(2+). Residue Glu247 participates in Mg(2+) binding. A glycan (N-linked (GlcNAc...) asparagine) is linked at Asn347. Ca(2+) is bound at residue Gly362. I-EGF domains follow at residues 465 to 499 (CSAG…TRCE), 500 to 549 (CQEG…SFCE), 550 to 586 (CDNF…DNCN), and 587 to 626 (CSTD…ETCE). N-linked (GlcNAc...) asparagine glycosylation occurs at Asn479. A glycan (N-linked (GlcNAc...) asparagine) is linked at Asn552. N-linked (GlcNAc...) asparagine glycosylation is present at Asn586. Disulfide bonds link Cys587–Cys610, Cys594–Cys608, Cys602–Cys613, Cys615–Cys625, Cys628–Cys631, Cys635–Cys683, Cys641–Cys662, Cys644–Cys658, and Cys691–Cys715. N-linked (GlcNAc...) asparagine glycosylation is found at Asn655 and Asn706. A helical membrane pass occupies residues 723–743 (TILLAVVGSILLTGFALLVIW). The Cytoplasmic portion of the chain corresponds to 744–800 (KLLVTIHDRREFAKFQSERSRARYEMASNPLYRKPISTHTVDFTFNKFNKSYNGTVD). Ser771 is modified (phosphoserine).

It belongs to the integrin beta chain family. As to quaternary structure, heterodimer of an alpha and a beta subunit. Beta-5 (ITGB5) associates with alpha-V (ITGAV). Interacts with MYO10. Interacts with DAB2. Integrin ITGAV:ITGB5 interacts with FBLN5 (via N-terminus). ITGAV:ITGB5 interacts with CCN3. Interacts with tensin TNS3; TNS3 also interacts with PEAK1, thus acting as an adapter molecule to bridge the association of PEAK1 with ITGB5.

It localises to the cell membrane. Its function is as follows. Integrin alpha-V/beta-5 (ITGAV:ITGB5) is a receptor for fibronectin. It recognizes the sequence R-G-D in its ligand. This Bos taurus (Bovine) protein is Integrin beta-5 (ITGB5).